The chain runs to 198 residues: ATP-dependent Clp protease proteolytic subunit (198 aa).

Ser98 functions as the Nucleophile in the catalytic mechanism. His123 is an active-site residue.

Belongs to the peptidase S14 family. In terms of assembly, fourteen ClpP subunits assemble into 2 heptameric rings which stack back to back to give a disk-like structure with a central cavity, resembling the structure of eukaryotic proteasomes.

Its subcellular location is the cytoplasm. It catalyses the reaction Hydrolysis of proteins to small peptides in the presence of ATP and magnesium. alpha-casein is the usual test substrate. In the absence of ATP, only oligopeptides shorter than five residues are hydrolyzed (such as succinyl-Leu-Tyr-|-NHMec, and Leu-Tyr-Leu-|-Tyr-Trp, in which cleavage of the -Tyr-|-Leu- and -Tyr-|-Trp bonds also occurs).. Its function is as follows. Cleaves peptides in various proteins in a process that requires ATP hydrolysis. Has a chymotrypsin-like activity. Plays a major role in the degradation of misfolded proteins. The protein is ATP-dependent Clp protease proteolytic subunit of Levilactobacillus brevis (strain ATCC 367 / BCRC 12310 / CIP 105137 / JCM 1170 / LMG 11437 / NCIMB 947 / NCTC 947) (Lactobacillus brevis).